A 346-amino-acid chain; its full sequence is 4-hydroxy-2-oxovalerate aldolase (346 aa).

The region spanning 8 to 260 (VTLHDMSLRD…ETGIDLYKIM (253 aa)) is the Pyruvate carboxyltransferase domain. Residue 16–17 (RD) participates in substrate binding. Position 17 (aspartate 17) interacts with Mn(2+). Residue histidine 20 is the Proton acceptor of the active site. Substrate-binding residues include serine 170 and histidine 199. Histidine 199 and histidine 201 together coordinate Mn(2+). Tyrosine 290 is a binding site for substrate.

This sequence belongs to the 4-hydroxy-2-oxovalerate aldolase family.

The enzyme catalyses (S)-4-hydroxy-2-oxopentanoate = acetaldehyde + pyruvate. In Stutzerimonas stutzeri (Pseudomonas stutzeri), this protein is 4-hydroxy-2-oxovalerate aldolase (nahM).